A 204-amino-acid chain; its full sequence is Proteasome subunit beta type-2-A (204 aa).

Methionine 1 bears the N-acetylmethionine mark.

The protein belongs to the peptidase T1B family. In terms of assembly, component of the 20S core complex of the 26S proteasome. The 26S proteasome is composed of a core protease (CP), known as the 20S proteasome, capped at one or both ends by the 19S regulatory particle (RP/PA700). The 20S proteasome core is composed of 28 subunits that are arranged in four stacked rings, resulting in a barrel-shaped structure. The two end rings are each formed by seven alpha subunits, and the two central rings are each formed by seven beta subunits. The catalytic chamber with the active sites is on the inside of the barrel.

Its subcellular location is the cytoplasm. The protein localises to the nucleus. Functionally, non-catalytic component of the proteasome, a multicatalytic proteinase complex which is characterized by its ability to cleave peptides with Arg, Phe, Tyr, Leu, and Glu adjacent to the leaving group at neutral or slightly basic pH. The proteasome has an ATP-dependent proteolytic activity. The chain is Proteasome subunit beta type-2-A (PBD1) from Arabidopsis thaliana (Mouse-ear cress).